The following is a 287-amino-acid chain: MFARLPLYLRLVRMDKPIGSLLLLWPTLNALWIASDGHPTWPLLVIFTVGTVLMRSAGCAINDYADRDFDRYVKRTENRPITSGKIKAWEAVALAAALSLLAFLLILPLNTLTKELSVAALFVAGSYPFTKRFFAIPQAYLGIAFGFGIPMAFAAIQGHVPLLAWVMLLANVFWSVAYDTEYAMVDRDDDIKIGIRTSALTFGRFDVAAIMICYAATLGIYVGIGVLLGFGVLYWLGWAAAAGCAIYHYTLIRNRERMACFAAFRHNNWLGGALFVGIAAHYAAGSF.

6 consecutive transmembrane segments (helical) span residues 30–50 (ALWIASDGHPTWPLLVIFTVG), 89–109 (WEAVALAAALSLLAFLLILPL), 133–153 (FFAIPQAYLGIAFGFGIPMAF), 158–178 (GHVPLLAWVMLLANVFWSVAY), 199–221 (ALTFGRFDVAAIMICYAATLGIY), and 267–287 (NNWLGGALFVGIAAHYAAGSF).

Belongs to the UbiA prenyltransferase family. The cofactor is Mg(2+).

The protein resides in the cell inner membrane. The catalysed reaction is all-trans-octaprenyl diphosphate + 4-hydroxybenzoate = 4-hydroxy-3-(all-trans-octaprenyl)benzoate + diphosphate. It functions in the pathway cofactor biosynthesis; ubiquinone biosynthesis. Its function is as follows. Catalyzes the prenylation of para-hydroxybenzoate (PHB) with an all-trans polyprenyl group. Mediates the second step in the final reaction sequence of ubiquinone-8 (UQ-8) biosynthesis, which is the condensation of the polyisoprenoid side chain with PHB, generating the first membrane-bound Q intermediate 3-octaprenyl-4-hydroxybenzoate. This is 4-hydroxybenzoate octaprenyltransferase from Paraburkholderia phytofirmans (strain DSM 17436 / LMG 22146 / PsJN) (Burkholderia phytofirmans).